The sequence spans 444 residues: Glutamate-1-semialdehyde 2,1-aminomutase (444 aa).

Lysine 267 carries the N6-(pyridoxal phosphate)lysine modification.

This sequence belongs to the class-III pyridoxal-phosphate-dependent aminotransferase family. HemL subfamily. In terms of assembly, homodimer. The cofactor is pyridoxal 5'-phosphate.

It is found in the cytoplasm. The enzyme catalyses (S)-4-amino-5-oxopentanoate = 5-aminolevulinate. The protein operates within porphyrin-containing compound metabolism; protoporphyrin-IX biosynthesis; 5-aminolevulinate from L-glutamyl-tRNA(Glu): step 2/2. The sequence is that of Glutamate-1-semialdehyde 2,1-aminomutase from Xylella fastidiosa (strain M12).